Reading from the N-terminus, the 54-residue chain is UPF0391 membrane protein Bpet1858 (54 aa).

Helical transmembrane passes span A5–A25 and A27–L47.

Belongs to the UPF0391 family.

The protein localises to the cell membrane. The protein is UPF0391 membrane protein Bpet1858 of Bordetella petrii (strain ATCC BAA-461 / DSM 12804 / CCUG 43448).